The following is a 118-amino-acid chain: Large ribosomal subunit protein bL20 (118 aa).

This sequence belongs to the bacterial ribosomal protein bL20 family.

Its function is as follows. Binds directly to 23S ribosomal RNA and is necessary for the in vitro assembly process of the 50S ribosomal subunit. It is not involved in the protein synthesizing functions of that subunit. The polypeptide is Large ribosomal subunit protein bL20 (Sulfurovum sp. (strain NBC37-1)).